A 698-amino-acid polypeptide reads, in one-letter code: Iron-sulfur clusters transporter ATM1, mitochondrial (698 aa).

The N-terminal 23 residues, 1-23 (MIPQLLQRSSRACPRYNPALYRL), are a transit peptide targeting the mitochondrion. Residues 24–113 (STTSQQRPGL…PKDDWGTKLR (90 aa)) are Mitochondrial matrix-facing. A disordered region spans residues 32–63 (GLTQTFWTSAPRREQPRTPTDSKPTTTKPSAV). Residues 48-61 (RTPTDSKPTTTKPS) are compositionally biased toward low complexity. Residues 114 to 135 (VSLAVSLLIGAKVLNVQVPFYF) traverse the membrane as a helical segment. Residues 114–404 (VSLAVSLLIG…LGSVYRELRQ (291 aa)) enclose the ABC transmembrane type-1 domain. Topologically, residues 136-158 (KSIVDSMNIDVAAVGGTATTVAG) are mitochondrial intermembrane. A helical membrane pass occupies residues 159 to 182 (AMILAYGASRIGATVFQELRNAVF). Topologically, residues 183-231 (ASVAQNAIRKVACNVFDHLLRLDLTFHLSKQTGGLTRALDRGTKGISFI) are mitochondrial matrix. Residues 232–255 (LSSMVFHVLPTALEISMVCGILTY) form a helical membrane-spanning segment. Position 256 (N256) is a topological domain, mitochondrial intermembrane. The helical transmembrane segment at 257 to 277 (YGAKFAALTVLTMVSYTAFTI) threads the bilayer. Topologically, residues 278-343 (WTTAWRTKFR…NSIKVATSLA (66 aa)) are mitochondrial matrix. Glutathione is bound by residues 283 to 287 (RTKFR) and 346 to 349 (NSGQ). Residues 344–362 (LLNSGQNIIFSSALTGMMY) form a helical membrane-spanning segment. Residues 363 to 377 (LAANGVAEGTLTVGD) lie on the Mitochondrial intermembrane side of the membrane. Residues 378–399 (LVMVNQLVFQLSVPLNFLGSVY) traverse the membrane as a helical segment. Residue G396 participates in glutathione binding. Over 400–698 (RELRQSLLDM…EEENDEQKKN (299 aa)) the chain is Mitochondrial matrix. The region spanning 439 to 675 (IKFENVNFAY…DGVYAELWSA (237 aa)) is the ABC transporter domain. Residues Y448 and 472-483 (GPSGCGKSTLLR) contribute to the ATP site. Residues 679 to 698 (MFGEDGKEKSEEENDEQKKN) form a disordered region. Residues 682–698 (EDGKEKSEEENDEQKKN) show a composition bias toward basic and acidic residues.

Belongs to the ABC transporter superfamily. ABCB family. Heavy Metal importer (TC 3.A.1.210) subfamily. In terms of assembly, homodimer.

It localises to the mitochondrion inner membrane. Its function is as follows. Performs an essential function in the generation of cytoplasmic iron-sulfur proteins by mediating the ATP-dependent export of Fe/S cluster precursors synthesized by NFS1 and other mitochondrial proteins. Hydrolyzes ATP. Binds glutathione and may function by transporting a glutathione-conjugated iron-sulfur compound. This chain is Iron-sulfur clusters transporter ATM1, mitochondrial, found in Gibberella zeae (strain ATCC MYA-4620 / CBS 123657 / FGSC 9075 / NRRL 31084 / PH-1) (Wheat head blight fungus).